The chain runs to 432 residues: Alcohol acyltransferase 9 (432 aa).

Residues H156 and D379 each act as proton acceptor in the active site.

Belongs to the plant acyltransferase family. As to expression, expressed in fruit.

The catalysed reaction is 2-(methylsulfanyl)acetyl-CoA + butan-1-ol = butyl 2-(methylsulfanyl)acetate + CoA. It catalyses the reaction ethanol + acetyl-CoA = ethyl acetate + CoA. It carries out the reaction butan-1-ol + acetyl-CoA = butyl acetate + CoA. The enzyme catalyses butan-1-ol + propanoyl-CoA = butyl propanoate + CoA. In terms of biological role, involved in the biosynthesis of volatile esters which confer kiwifruit flavor. Alcohol acyl transferase that can use a wide range of alcohols as substrate to produce esters. Exhibits acetyl-CoA:alcohol O-acyltransferase activity. The protein is Alcohol acyltransferase 9 of Actinidia eriantha (Velvet vine).